Reading from the N-terminus, the 222-residue chain is Glutathione S-transferase A1 (222 aa).

The residue at position 1 (Met1) is an N-acetylmethionine. N-acetylalanine; in Glutathione S-transferase A1, N-terminally processed is present on Ala2. The 81-residue stretch at 3-83 (EKPKLHYFNA…YIASKYNLYG (81 aa)) folds into the GST N-terminal domain. At Lys4 the chain carries N6-succinyllysine. Residues Tyr9, Arg45, 54-55 (QV), and 67-68 (QT) each bind glutathione. Residues 85 to 207 (DIKERALIDM…LQPGSPRKPP (123 aa)) enclose the GST C-terminal domain.

This sequence belongs to the GST superfamily. Alpha family. As to quaternary structure, homodimer or heterodimer of GSTA1 and GSTA2. As to expression, liver.

It localises to the cytoplasm. The enzyme catalyses RX + glutathione = an S-substituted glutathione + a halide anion + H(+). The catalysed reaction is prostaglandin A2 + glutathione = prostaglandin A2-S-(R)-glutathione. It catalyses the reaction prostaglandin J2 + glutathione = prostaglandin J2-S-(R)-glutathione. It carries out the reaction (13S)-hydroperoxy-(9Z,11E)-octadecadienoate + 2 glutathione = (13S)-hydroxy-(9Z,11E)-octadecadienoate + glutathione disulfide + H2O. The enzyme catalyses androst-5-ene-3,17-dione = androst-4-ene-3,17-dione. With respect to regulation, the isomerase activity is inhibited by S-methylglutathione (GSMe). In terms of biological role, glutathione S-transferase that catalyzes the nucleophilic attack of the sulfur atom of glutathione on the electrophilic groups of a wide range of exogenous and endogenous compounds. Involved in the formation of glutathione conjugates of both prostaglandin A2 (PGA2) and prostaglandin J2 (PGJ2). It also catalyzes the isomerization of D5-androstene-3,17-dione (AD) into D4-androstene-3,17-dione and may therefore play an important role in hormone biosynthesis. Through its glutathione-dependent peroxidase activity toward the fatty acid hydroperoxide (13S)-hydroperoxy-(9Z,11E)-octadecadienoate/13-HPODE it is also involved in the metabolism of oxidized linoleic acid. The chain is Glutathione S-transferase A1 (GSTA1) from Homo sapiens (Human).